We begin with the raw amino-acid sequence, 565 residues long: NAD-dependent malic enzyme (565 aa).

Tyr104 acts as the Proton donor in catalysis. Arg157 lines the NAD(+) pocket. Lys175 acts as the Proton acceptor in catalysis. Residues Glu246, Asp247, and Asp270 each coordinate a divalent metal cation. Residues Asp270 and Asn418 each contribute to the NAD(+) site.

This sequence belongs to the malic enzymes family. Homotetramer. Mg(2+) is required as a cofactor. Requires Mn(2+) as cofactor.

The catalysed reaction is (S)-malate + NAD(+) = pyruvate + CO2 + NADH. It catalyses the reaction oxaloacetate + H(+) = pyruvate + CO2. The sequence is that of NAD-dependent malic enzyme from Yersinia pseudotuberculosis serotype O:1b (strain IP 31758).